Here is a 240-residue protein sequence, read N- to C-terminus: Large ribosomal subunit protein uL2 (240 aa).

Positions 200-240 (HPFGGGGRQHPGKPKSISRNAPPGRKVGDIASKRTGRGGNE) are disordered.

This sequence belongs to the universal ribosomal protein uL2 family. As to quaternary structure, part of the 50S ribosomal subunit. Forms a bridge to the 30S subunit in the 70S ribosome. Interacts weakly with protein L37Ae.

Its function is as follows. One of the primary rRNA binding proteins. Required for association of the 30S and 50S subunits to form the 70S ribosome, for tRNA binding and peptide bond formation. It has been suggested to have peptidyltransferase activity; this is somewhat controversial. Makes several contacts with the 16S rRNA in the 70S ribosome. In Haloarcula marismortui (strain ATCC 43049 / DSM 3752 / JCM 8966 / VKM B-1809) (Halobacterium marismortui), this protein is Large ribosomal subunit protein uL2 (rpl2).